Here is a 273-residue protein sequence, read N- to C-terminus: Dermonecrotic toxin SdSicTox-betaIF1 (273 aa).

The active site involves His-5. Residues Glu-25 and Asp-27 each contribute to the Mg(2+) site. The active-site Nucleophile is the His-41. 2 disulfides stabilise this stretch: Cys-45-Cys-51 and Cys-47-Cys-189.

Belongs to the arthropod phospholipase D family. Class II subfamily. It depends on Mg(2+) as a cofactor. In terms of tissue distribution, expressed by the venom gland.

It localises to the secreted. It carries out the reaction an N-(acyl)-sphingosylphosphocholine = an N-(acyl)-sphingosyl-1,3-cyclic phosphate + choline. The enzyme catalyses an N-(acyl)-sphingosylphosphoethanolamine = an N-(acyl)-sphingosyl-1,3-cyclic phosphate + ethanolamine. It catalyses the reaction a 1-acyl-sn-glycero-3-phosphocholine = a 1-acyl-sn-glycero-2,3-cyclic phosphate + choline. The catalysed reaction is a 1-acyl-sn-glycero-3-phosphoethanolamine = a 1-acyl-sn-glycero-2,3-cyclic phosphate + ethanolamine. Dermonecrotic toxins cleave the phosphodiester linkage between the phosphate and headgroup of certain phospholipids (sphingolipid and lysolipid substrates), forming an alcohol (often choline) and a cyclic phosphate. This toxin acts on sphingomyelin (SM). It may also act on ceramide phosphoethanolamine (CPE), lysophosphatidylcholine (LPC) and lysophosphatidylethanolamine (LPE), but not on lysophosphatidylserine (LPS), and lysophosphatidylglycerol (LPG). It acts by transphosphatidylation, releasing exclusively cyclic phosphate products as second products. Induces dermonecrosis, hemolysis, increased vascular permeability, edema, inflammatory response, and platelet aggregation. The polypeptide is Dermonecrotic toxin SdSicTox-betaIF1 (Sicarius cf. damarensis (strain GJB-2008) (Six-eyed sand spider)).